Reading from the N-terminus, the 507-residue chain is Desmethyl-deoxy-podophyllotoxin synthase (507 aa).

The chain crosses the membrane as a helical span at residues 1 to 21 (MEFLSFPLSSALLIILLFMLV). Residue C440 coordinates heme.

Belongs to the cytochrome P450 family. Heme serves as cofactor. As to expression, rhizome-specific expression.

It localises to the membrane. It carries out the reaction (-)-deoxypodophyllotoxin + reduced [NADPH--hemoprotein reductase] + O2 = (-)-4'-desmethyl-deoxypodophyllotoxin + formaldehyde + oxidized [NADPH--hemoprotein reductase] + H2O + H(+). Its pathway is aromatic compound metabolism; phenylpropanoid biosynthesis. Cytochrome P450 involved in the biosynthesis of etoposide, a chemotherapeutic compound of the topoisomerase inhibitor family. Catalyzes the conversion of deoxypodophyllotoxin to desmethyl-deoxypodophyllotoxin. The protein is Desmethyl-deoxy-podophyllotoxin synthase of Sinopodophyllum hexandrum (Himalayan may apple).